The following is a 142-amino-acid chain: Transcriptional regulator MraZ (142 aa).

SpoVT-AbrB domains lie at 5-47 (THTP…PAPE) and 76-119 (AHDE…DRVA).

It belongs to the MraZ family. As to quaternary structure, forms oligomers.

The protein localises to the cytoplasm. It is found in the nucleoid. The polypeptide is Transcriptional regulator MraZ (Salinispora arenicola (strain CNS-205)).